Reading from the N-terminus, the 86-residue chain is Large ribosomal subunit protein bL31B (86 aa).

It belongs to the bacterial ribosomal protein bL31 family. Type B subfamily. Part of the 50S ribosomal subunit.

This Burkholderia cenocepacia (strain ATCC BAA-245 / DSM 16553 / LMG 16656 / NCTC 13227 / J2315 / CF5610) (Burkholderia cepacia (strain J2315)) protein is Large ribosomal subunit protein bL31B.